Consider the following 85-residue polypeptide: Large ribosomal subunit protein bL31B (85 aa).

The protein belongs to the bacterial ribosomal protein bL31 family. Type B subfamily. In terms of assembly, part of the 50S ribosomal subunit.

The polypeptide is Large ribosomal subunit protein bL31B (Micrococcus luteus (strain ATCC 4698 / DSM 20030 / JCM 1464 / CCM 169 / CCUG 5858 / IAM 1056 / NBRC 3333 / NCIMB 9278 / NCTC 2665 / VKM Ac-2230) (Micrococcus lysodeikticus)).